We begin with the raw amino-acid sequence, 342 residues long: Cytochrome f (342 aa).

The first 28 residues, 1–28 (MKKQWIAGAFGLTAALAGLVSVPQSALA), serve as a signal peptide directing secretion. Positions 48, 51, and 52 each coordinate heme. A helical transmembrane segment spans residues 305–325 (VTWLVAFLAAAFICQLLLVLK).

Belongs to the cytochrome f family. The 4 large subunits of the cytochrome b6-f complex are cytochrome b6, subunit IV (17 kDa polypeptide, PetD), cytochrome f and the Rieske protein, while the 4 small subunits are PetG, PetL, PetM and PetN. The complex functions as a dimer. Requires heme as cofactor.

It localises to the cell inner membrane. Component of the cytochrome b6-f complex, which mediates electron transfer between photosystem II (PSII) and photosystem I (PSI), cyclic electron flow around PSI, and state transitions. The chain is Cytochrome f (petA) from Gloeobacter violaceus (strain ATCC 29082 / PCC 7421).